A 195-amino-acid polypeptide reads, in one-letter code: Glycerol-3-phosphate acyltransferase (195 aa).

The next 5 membrane-spanning stretches (helical) occupy residues 7-27 (IFIL…SYVI), 52-72 (LALL…AIAQ), 80-100 (ILFL…YLFF), 113-133 (LIFI…ICFL), and 147-167 (LIAL…IFTI).

It belongs to the PlsY family. As to quaternary structure, probably interacts with PlsX.

It localises to the cell inner membrane. The catalysed reaction is an acyl phosphate + sn-glycerol 3-phosphate = a 1-acyl-sn-glycero-3-phosphate + phosphate. It participates in lipid metabolism; phospholipid metabolism. In terms of biological role, catalyzes the transfer of an acyl group from acyl-phosphate (acyl-PO(4)) to glycerol-3-phosphate (G3P) to form lysophosphatidic acid (LPA). This enzyme utilizes acyl-phosphate as fatty acyl donor, but not acyl-CoA or acyl-ACP. In Ehrlichia ruminantium (strain Welgevonden), this protein is Glycerol-3-phosphate acyltransferase.